Here is a 475-residue protein sequence, read N- to C-terminus: MKMPLDIGVIHFIGIGGIGMSGIAEVFYNLGYKVQGSDQVESANVERLRRKGINVHIGHYAENLGNAEVVVFSTAVKKTNPEYIAAKERHLPLVRRAEMLAELMRFRRAIAVGGTHGKTTTTSMVAALLDAGHFDPVVINGGIINAYGTNSRTGEGDWMIVEADESDGTFLKLPADIAVVTNIDAEHLDHYGSFDAVRTAFRQFVENVPFYGFAVLCVDHPEVQSLAGRIDDRWVITYGANPQADVRFLNLSRDGQKTHFDVLVRSRKTGRKIELKNLLLPMAGQHNVANATAAIAIAHELGISNELIKKGLAEFGGVKRRFTRTGSWRGIEIFDDYGHHPVEIKAVLRAARESAKGRVIAIAQPHRYSRLYHLFDDFAACFNDADTVLITPVYAAGEEPIVGFGSQELVEHIKMAGHRDVRLIHDLEDVVSLVSKFAQAEDYVVFLGAGNITQWACALPHRLSGLDGYDKFSAH.

114-120 (GTHGKTT) contacts ATP.

This sequence belongs to the MurCDEF family.

The protein localises to the cytoplasm. The enzyme catalyses UDP-N-acetyl-alpha-D-muramate + L-alanine + ATP = UDP-N-acetyl-alpha-D-muramoyl-L-alanine + ADP + phosphate + H(+). Its pathway is cell wall biogenesis; peptidoglycan biosynthesis. Cell wall formation. The polypeptide is UDP-N-acetylmuramate--L-alanine ligase (Bartonella tribocorum (strain CIP 105476 / IBS 506)).